We begin with the raw amino-acid sequence, 393 residues long: NAD(P)H-quinone oxidoreductase subunit H, chloroplastic (393 aa).

The protein belongs to the complex I 49 kDa subunit family. As to quaternary structure, NDH is composed of at least 16 different subunits, 5 of which are encoded in the nucleus.

The protein resides in the plastid. The protein localises to the chloroplast thylakoid membrane. It carries out the reaction a plastoquinone + NADH + (n+1) H(+)(in) = a plastoquinol + NAD(+) + n H(+)(out). The enzyme catalyses a plastoquinone + NADPH + (n+1) H(+)(in) = a plastoquinol + NADP(+) + n H(+)(out). In terms of biological role, NDH shuttles electrons from NAD(P)H:plastoquinone, via FMN and iron-sulfur (Fe-S) centers, to quinones in the photosynthetic chain and possibly in a chloroplast respiratory chain. The immediate electron acceptor for the enzyme in this species is believed to be plastoquinone. Couples the redox reaction to proton translocation, and thus conserves the redox energy in a proton gradient. This is NAD(P)H-quinone oxidoreductase subunit H, chloroplastic from Pelargonium hortorum (Common geranium).